The primary structure comprises 248 residues: Homeobox protein BarH-like 1 (248 aa).

A DNA-binding region (homeobox) is located at residues 135-194 (GRRSRTVFTELQLMGLEKRFEKQKYLSTPDRIDLAESLGLSQLQVKTWYQNRRMKWKKIV). Residues 197 to 248 (GGGLESPTKPKGRPKKNSIPTSEQLSEQERTREADRLSDGGASSLSDANQEE) are disordered. Residues 223–234 (EQERTREADRLS) are compositionally biased toward basic and acidic residues. Residues 237-248 (GASSLSDANQEE) show a composition bias toward polar residues.

The protein belongs to the BAR homeobox family.

The protein resides in the nucleus. Its function is as follows. Transcription factor, is involved in craniofacial development, and in stomach organogenesis. In Danio rerio (Zebrafish), this protein is Homeobox protein BarH-like 1 (barx1).